The following is a 363-amino-acid chain: Ribosome-binding ATPase YchF (363 aa).

The 255-residue stretch at 3 to 257 (FKCGFVGLPN…VSAYDHLSLK (255 aa)) folds into the OBG-type G domain. Residue 12 to 17 (NVGKST) coordinates ATP. Mg(2+) contacts are provided by serine 16 and threonine 36. The region spanning 278-361 (NLITFFTAGK…CDGDIIHVLY (84 aa)) is the TGS domain.

Belongs to the TRAFAC class OBG-HflX-like GTPase superfamily. OBG GTPase family. YchF/OLA1 subfamily. Requires Mg(2+) as cofactor.

ATPase that binds to both the 70S ribosome and the 50S ribosomal subunit in a nucleotide-independent manner. The polypeptide is Ribosome-binding ATPase YchF (Buchnera aphidicola subsp. Baizongia pistaciae (strain Bp)).